The following is a 203-amino-acid chain: Small ribosomal subunit protein uS4 (203 aa).

An S4 RNA-binding domain is found at Arg93–Ala173.

It belongs to the universal ribosomal protein uS4 family. Part of the 30S ribosomal subunit. Contacts protein S5. The interaction surface between S4 and S5 is involved in control of translational fidelity.

One of the primary rRNA binding proteins, it binds directly to 16S rRNA where it nucleates assembly of the body of the 30S subunit. In terms of biological role, with S5 and S12 plays an important role in translational accuracy. In Chlorobium limicola (strain DSM 245 / NBRC 103803 / 6330), this protein is Small ribosomal subunit protein uS4.